A 258-amino-acid polypeptide reads, in one-letter code: Snake venom serine protease catroxase-2 (258 aa).

A signal peptide spans 1–18 (MVLIRVLANLLILQLSYA). Residues 19 to 24 (QKSSEL) constitute a propeptide that is removed on maturation. The Peptidase S1 domain maps to 25-249 (VVGGDECNIN…YNDWIQSIIA (225 aa)). Cystine bridges form between Cys-31-Cys-163, Cys-50-Cys-66, Cys-98-Cys-256, Cys-142-Cys-210, Cys-174-Cys-189, and Cys-200-Cys-225. A glycan (N-linked (GlcNAc...) asparagine) is linked at Asn-44. Active-site charge relay system residues include His-65 and Asp-110. Ser-204 acts as the Charge relay system in catalysis.

It belongs to the peptidase S1 family. Snake venom subfamily. In terms of assembly, monomer. Expressed by the venom gland.

It is found in the secreted. Its function is as follows. Snake venom serine protease that may act in the hemostasis system of the prey. The polypeptide is Snake venom serine protease catroxase-2 (Crotalus atrox (Western diamondback rattlesnake)).